The primary structure comprises 298 residues: Inosose dehydratase (298 aa).

It belongs to the IolE/MocC family. It depends on glutathione as a cofactor. Co(2+) is required as a cofactor. The cofactor is Mn(2+).

The enzyme catalyses scyllo-inosose = 3D-3,5/4-trihydroxycyclohexane-1,2-dione + H2O. It participates in polyol metabolism; myo-inositol degradation into acetyl-CoA; acetyl-CoA from myo-inositol: step 2/7. Its function is as follows. Catalyzes the dehydration of inosose (2-keto-myo-inositol, 2KMI or 2,4,6/3,5-pentahydroxycyclohexanone) to 3D-(3,5/4)-trihydroxycyclohexane-1,2-dione (D-2,3-diketo-4-deoxy-epi-inositol). This chain is Inosose dehydratase, found in Bacillus thuringiensis (strain Al Hakam).